The sequence spans 154 residues: AP-1 complex subunit sigma-3 (154 aa).

The protein belongs to the adaptor complexes small subunit family. Adaptor protein complex 1 (AP-1) is a heterotetramer composed of two large adaptins (gamma-type subunit AP1G1 and beta-type subunit AP1B1), a medium adaptin (mu-type subunit AP1M1 or AP1M2) and a small adaptin (sigma-type subunit AP1S1 or AP1S2 or AP1S3).

The protein resides in the golgi apparatus. It is found in the cytoplasmic vesicle membrane. It localises to the membrane. The protein localises to the clathrin-coated pit. In terms of biological role, subunit of clathrin-associated adaptor protein complex 1 that plays a role in protein sorting in the late-Golgi/trans-Golgi network (TGN) and/or endosomes. The AP complexes mediate both the recruitment of clathrin to membranes and the recognition of sorting signals within the cytosolic tails of transmembrane cargo molecules. Involved in TLR3 trafficking. This chain is AP-1 complex subunit sigma-3 (Ap1s3), found in Mus musculus (Mouse).